Here is a 712-residue protein sequence, read N- to C-terminus: Lactoperoxidase (712 aa).

Residues Met-1–Ala-21 form the signal peptide. The propeptide occupies Ser-22–Leu-117. Asn-106 carries an N-linked (GlcNAc...) (complex) asparagine; alternate glycan. A glycan (N-linked (GlcNAc...) (hybrid) asparagine; alternate) is linked at Asn-106. 4 disulfides stabilise this stretch: Cys-123/Cys-284, Cys-132/Cys-145, Cys-246/Cys-256, and Cys-250/Cys-274. An N-linked (GlcNAc...) (complex) asparagine; alternate glycan is attached at Asn-212. N-linked (GlcNAc...) (hybrid) asparagine; alternate glycosylation occurs at Asn-212. Asp-225 contacts heme b. His-226 (proton acceptor) is an active-site residue. Asp-227 contacts Ca(2+). 4 residues coordinate Ca(2+): Thr-301, Phe-303, Asp-305, and Ser-307. Position 315 is a phosphoserine (Ser-315). Asn-322 carries an N-linked (GlcNAc...) (high mannose) asparagine glycan. Cys-354 and Cys-365 are joined by a disulfide. Asn-358 is a glycosylation site (N-linked (GlcNAc...) asparagine). Heme b is bound at residue Glu-375. Asn-449 carries N-linked (GlcNAc...) (complex) asparagine; alternate glycosylation. Asn-449 is a glycosylation site (N-linked (GlcNAc...) (hybrid) asparagine; alternate). N-linked (GlcNAc...) (high mannose) asparagine; alternate glycosylation occurs at Asn-449. Position 468 (His-468) interacts with heme b. Tyr-482 is modified (3'-nitrotyrosine). Disulfide bonds link Cys-573–Cys-630 and Cys-671–Cys-696.

The protein belongs to the peroxidase family. XPO subfamily. Ca(2+) is required as a cofactor. The cofactor is heme b. In terms of tissue distribution, mammary gland; milk.

It localises to the secreted. Its subcellular location is the cytoplasm. It carries out the reaction 2 a phenolic donor + H2O2 = 2 a phenolic radical donor + 2 H2O. The catalysed reaction is thiocyanate + H2O2 + H(+) = hypothiocyanous acid + H2O. It catalyses the reaction iodide + H2O2 = hypoiodite + H2O. With respect to regulation, inhibited by small molecule methimazole (MMZ). Its function is as follows. Heme-containing oxidoreductase which catalyzes the conversion of thiocyanate (SCN(-)) into antimicrobial agent hypothiocyanous acid (OSCN(-)) in the presence of hydrogen peroxide (H2O2). Also involved in the conversion of iodide (I(-)) into hypoiodite (IO(-)) in the presence of H2O2. Responsible for the inactivation of a wide range of micro-organisms and hence, important component of defense mechanism. Shows antibacterial properties against several Gram-positive bacteria including some Staphylococcus species and Gram-negative bacteria including E.coli, P.aeruginosa and some Salmonella species. Inhibits the growth of several fungi including A.niger, Trichoderma species, C.cassicola, P.meadii and C.salmonicolor. Does not have anti-fungal activity towards C.albicans and Pythium species. May protect the udder from infection and may promote growth in newborns. May be implicated in airway host defense against infection. May contribute to maintaining an appropriate H2O2 cellular level, therefore protecting cells from H2O2-caused injuries and inflammation. The chain is Lactoperoxidase (LPO) from Capra hircus (Goat).